We begin with the raw amino-acid sequence, 204 residues long: LexA repressor (204 aa).

The segment at residues 28–48 (VREIGQAVGLASSSTVHGHLS) is a DNA-binding region (H-T-H motif). Residues serine 126 and lysine 164 each act as for autocatalytic cleavage activity in the active site.

This sequence belongs to the peptidase S24 family. In terms of assembly, homodimer.

It carries out the reaction Hydrolysis of Ala-|-Gly bond in repressor LexA.. Represses a number of genes involved in the response to DNA damage (SOS response), including recA and lexA. In the presence of single-stranded DNA, RecA interacts with LexA causing an autocatalytic cleavage which disrupts the DNA-binding part of LexA, leading to derepression of the SOS regulon and eventually DNA repair. This is LexA repressor from Bacillus mycoides (strain KBAB4) (Bacillus weihenstephanensis).